The sequence spans 344 residues: MNVIGIESSCDDTAIAIVNSNREIIANVVISQYTEHLPYSGVVPEIAARAHLKNLQYAMKETLNQAKINFTDIDVIAATSGPGLIGGVIVGSVFGQAIACALGKDFIAVNHLEGHILAVRLNENISFPYLVLLVSGGHCQFIAVLGVGKYKILGQTIDDAVGEAFDKTARLLKLGYPGGPIIEKLASKGDPHKYSLPLSMTKKSGCDLSFSGLKTAVKQLIFSIESLSEKVICDICASFQYTVVQILLCRSINAIKLFESYCSNNFKINRKNYFVISGGVAANQYLRQEIFNLASTYGYCGVAPPSNLCTDNAAMIAWAGIERLNANLFSSNFVPRAKWSVEEL.

Positions 111 and 115 each coordinate Fe cation. Residues Leu133 to Gly137, Asp166, Gly179, and Asn283 each bind substrate. Asp311 lines the Fe cation pocket.

Belongs to the KAE1 / TsaD family. Fe(2+) is required as a cofactor.

It is found in the cytoplasm. It catalyses the reaction L-threonylcarbamoyladenylate + adenosine(37) in tRNA = N(6)-L-threonylcarbamoyladenosine(37) in tRNA + AMP + H(+). In terms of biological role, required for the formation of a threonylcarbamoyl group on adenosine at position 37 (t(6)A37) in tRNAs that read codons beginning with adenine. Is involved in the transfer of the threonylcarbamoyl moiety of threonylcarbamoyl-AMP (TC-AMP) to the N6 group of A37, together with TsaE and TsaB. TsaD likely plays a direct catalytic role in this reaction. In Orientia tsutsugamushi (strain Ikeda) (Rickettsia tsutsugamushi), this protein is tRNA N6-adenosine threonylcarbamoyltransferase.